We begin with the raw amino-acid sequence, 208 residues long: V-type ATP synthase subunit E (208 aa).

This sequence belongs to the V-ATPase E subunit family.

Produces ATP from ADP in the presence of a proton gradient across the membrane. The polypeptide is V-type ATP synthase subunit E (Chlamydia felis (strain Fe/C-56) (Chlamydophila felis)).